The following is a 438-amino-acid chain: Porin AaxA (438 aa).

The first 21 residues, 1–21 (MISFRFLLLSGLCALGISSYA), serve as a signal peptide directing secretion.

It belongs to the OprB family.

It is found in the cell outer membrane. Functionally, facilitates L-arginine uptake, as part of the AaxABC system. The arginine uptake by the bacterium in the macrophage may be a virulence factor against the host innate immune response. The protein is Porin AaxA (aaxA) of Chlamydia pneumoniae (Chlamydophila pneumoniae).